The chain runs to 349 residues: MSKNKLSKGQERRVQANHQRRLKRTDNKPELDDSQLGEPQDGIVISRFGMHADVEAADGTQHRCNIRRTLRSLVTGDRVVWRPGVGTHAGVKGIVEAVHERTSVLNRPDIYDGVKPIAANIDQIVIVSAILPELSLNMIDRYLVACETLEVEPLIVLNKIDLLDAEARKTVDGMMDIYRHIGYRVLEVSSQTREGMEAFEQALADRISIFAGQSGVGKSSLLNALLPPSDKQILVNQVSDVSGLGQHTTTAARLYHFQHGGDVIDSPGVREFGLWHLEPEQVTQAYVEFRDYLGGCKFRDCRHDTDPGCAIRGAMEKGDIAKERFENYHRILESMASVKVRKNFTDAAG.

The segment at 1–38 is disordered; the sequence is MSKNKLSKGQERRVQANHQRRLKRTDNKPELDDSQLGE. Residues 102–272 enclose the CP-type G domain; sequence TSVLNRPDIY…VIDSPGVREF (171 aa). Residues 158 to 161 and 212 to 220 each bind GTP; these read NKID and GQSGVGKSS. Positions 296, 301, 303, and 309 each coordinate Zn(2+).

The protein belongs to the TRAFAC class YlqF/YawG GTPase family. RsgA subfamily. In terms of assembly, monomer. Associates with 30S ribosomal subunit, binds 16S rRNA. It depends on Zn(2+) as a cofactor.

It localises to the cytoplasm. Functionally, one of several proteins that assist in the late maturation steps of the functional core of the 30S ribosomal subunit. Helps release RbfA from mature subunits. May play a role in the assembly of ribosomal proteins into the subunit. Circularly permuted GTPase that catalyzes slow GTP hydrolysis, GTPase activity is stimulated by the 30S ribosomal subunit. This chain is Small ribosomal subunit biogenesis GTPase RsgA, found in Serratia proteamaculans (strain 568).